Here is a 468-residue protein sequence, read N- to C-terminus: Glutamate--tRNA ligase 2 (468 aa).

The short motif at 9–19 (PSPTGFLHIGG) is the 'HIGH' region element. The 'KMSKS' region signature appears at 238-242 (KLSKR). Residue lysine 241 participates in ATP binding.

This sequence belongs to the class-I aminoacyl-tRNA synthetase family. Glutamate--tRNA ligase type 1 subfamily. In terms of assembly, monomer.

Its subcellular location is the cytoplasm. It catalyses the reaction tRNA(Glu) + L-glutamate + ATP = L-glutamyl-tRNA(Glu) + AMP + diphosphate. Functionally, catalyzes the attachment of glutamate to tRNA(Glu) in a two-step reaction: glutamate is first activated by ATP to form Glu-AMP and then transferred to the acceptor end of tRNA(Glu). The chain is Glutamate--tRNA ligase 2 from Rhodospirillum rubrum (strain ATCC 11170 / ATH 1.1.1 / DSM 467 / LMG 4362 / NCIMB 8255 / S1).